Here is a 207-residue protein sequence, read N- to C-terminus: MPKVTVYNQTGSQVGEIELAEAIFGIEPNEAVLFEAVVMQRASLRQGTHKVKNRSEVSGGGRKPWRQKGTGRARQGSIRSPQWRGGGTVFGPTPRSYAYKLPKKVRRLAIKSALATKVVENNIVVLEDLVLNAPKTKDMVAVLKGLAVEKKALIVTADVNEAVELSARNIPGVTVITADGVNVLDVLHHDKLIMTKAAVEKVEEVLA.

The disordered stretch occupies residues threonine 48 to valine 89.

The protein belongs to the universal ribosomal protein uL4 family. Part of the 50S ribosomal subunit.

In terms of biological role, one of the primary rRNA binding proteins, this protein initially binds near the 5'-end of the 23S rRNA. It is important during the early stages of 50S assembly. It makes multiple contacts with different domains of the 23S rRNA in the assembled 50S subunit and ribosome. Forms part of the polypeptide exit tunnel. The sequence is that of Large ribosomal subunit protein uL4 from Bacillus cytotoxicus (strain DSM 22905 / CIP 110041 / 391-98 / NVH 391-98).